The sequence spans 269 residues: Aegyptin-like protein (269 aa).

Residues 1-19 (MKLLLLLASVLCLALIVSA) form the signal peptide. The interval 19-152 (ARPSDETTDQ…GGAEGGEESP (134 aa)) is disordered. The segment at 38–148 (TSDSYHQEED…AGEEGGAEGG (111 aa)) is GE-rich region which mediates binding of Ca(2+). Acidic residues-rich tracts occupy residues 56–73 (GTED…ESSS), 98–121 (GEED…EGGA), and 131–149 (GGAD…EGGE). Residues 148–269 (GEESPVNTYH…DCIVEKRDSE (122 aa)) are mediates binding of host collagen and inhibition of platelet aggregation. Intrachain disulfides connect Cys208/Cys261 and Cys230/Cys239.

This sequence belongs to the aegyptin family. Female saliva (at protein level). Distal lateral lobes of female salivary gland (at protein level). Low-level expression in male salivary gland. Not detected in female and male carcasses.

It is found in the secreted. Its function is as follows. Modulates blood feeding of female mosquitoes on vertebrate hosts. Inhibits collagen-induced platelet aggregation in the host via preventing collagen interaction with its ligands: glycoprotein VI and integrin alpha-2/beta-1 (ITGA2/ITGB1). Inhibits collagen-induced increase of Ca(2+) levels in host platelets. Binds to host collagens. Binds Ca(2+). Prevents a decrease in platelet count in the host blood after collagen injection. (Microbial infection) Does not affect the development of Plasmodium berghei parasites in mosquitoes. This Anopheles stephensi (Indo-Pakistan malaria mosquito) protein is Aegyptin-like protein.